We begin with the raw amino-acid sequence, 246 residues long: 4-hydroxy-tetrahydrodipicolinate reductase (246 aa).

9-14 (GNTGRM) contacts NAD(+). Arg36 provides a ligand contact to NADP(+). NAD(+)-binding positions include 78 to 80 (GTT) and 104 to 107 (SPNM). Residue His137 is the Proton donor/acceptor of the active site. (S)-2,3,4,5-tetrahydrodipicolinate is bound at residue His138. Lys141 (proton donor) is an active-site residue. 147–148 (GT) is a (S)-2,3,4,5-tetrahydrodipicolinate binding site.

This sequence belongs to the DapB family.

The protein resides in the cytoplasm. It carries out the reaction (S)-2,3,4,5-tetrahydrodipicolinate + NAD(+) + H2O = (2S,4S)-4-hydroxy-2,3,4,5-tetrahydrodipicolinate + NADH + H(+). It catalyses the reaction (S)-2,3,4,5-tetrahydrodipicolinate + NADP(+) + H2O = (2S,4S)-4-hydroxy-2,3,4,5-tetrahydrodipicolinate + NADPH + H(+). Its pathway is amino-acid biosynthesis; L-lysine biosynthesis via DAP pathway; (S)-tetrahydrodipicolinate from L-aspartate: step 4/4. In terms of biological role, catalyzes the conversion of 4-hydroxy-tetrahydrodipicolinate (HTPA) to tetrahydrodipicolinate. This Chlamydia muridarum (strain MoPn / Nigg) protein is 4-hydroxy-tetrahydrodipicolinate reductase.